The primary structure comprises 504 residues: Glutamate--tRNA ligase (504 aa).

A 'HIGH' region motif is present at residues 10-20 (PSPTGDPHVGT). Positions 251-255 (KLSKR) match the 'KMSKS' region motif. Lys-254 lines the ATP pocket.

It belongs to the class-I aminoacyl-tRNA synthetase family. Glutamate--tRNA ligase type 1 subfamily. In terms of assembly, monomer.

It is found in the cytoplasm. The enzyme catalyses tRNA(Glu) + L-glutamate + ATP = L-glutamyl-tRNA(Glu) + AMP + diphosphate. Functionally, catalyzes the attachment of glutamate to tRNA(Glu) in a two-step reaction: glutamate is first activated by ATP to form Glu-AMP and then transferred to the acceptor end of tRNA(Glu). This chain is Glutamate--tRNA ligase, found in Cellvibrio japonicus (strain Ueda107) (Pseudomonas fluorescens subsp. cellulosa).